The chain runs to 81 residues: Photosystem I iron-sulfur center (81 aa).

4Fe-4S ferredoxin-type domains lie at 2 to 31 (SHSV…MVPW) and 39 to 68 (IASA…VRVY). 8 residues coordinate [4Fe-4S] cluster: Cys-11, Cys-14, Cys-17, Cys-21, Cys-48, Cys-51, Cys-54, and Cys-58.

In terms of assembly, the eukaryotic PSI reaction center is composed of at least 11 subunits. The cofactor is [4Fe-4S] cluster.

It localises to the plastid. Its subcellular location is the chloroplast thylakoid membrane. It catalyses the reaction reduced [plastocyanin] + hnu + oxidized [2Fe-2S]-[ferredoxin] = oxidized [plastocyanin] + reduced [2Fe-2S]-[ferredoxin]. Apoprotein for the two 4Fe-4S centers FA and FB of photosystem I (PSI); essential for photochemical activity. FB is the terminal electron acceptor of PSI, donating electrons to ferredoxin. The C-terminus interacts with PsaA/B/D and helps assemble the protein into the PSI complex. Required for binding of PsaD and PsaE to PSI. PSI is a plastocyanin/cytochrome c6-ferredoxin oxidoreductase, converting photonic excitation into a charge separation, which transfers an electron from the donor P700 chlorophyll pair to the spectroscopically characterized acceptors A0, A1, FX, FA and FB in turn. The sequence is that of Photosystem I iron-sulfur center from Emiliania huxleyi (Coccolithophore).